The primary structure comprises 412 residues: Type II methyltransferase M.Sau3AI (412 aa).

The 399-residue stretch at I4–T402 folds into the SAM-dependent MTase C5-type domain. Residue C85 is part of the active site.

Belongs to the class I-like SAM-binding methyltransferase superfamily. C5-methyltransferase family.

It carries out the reaction a 2'-deoxycytidine in DNA + S-adenosyl-L-methionine = a 5-methyl-2'-deoxycytidine in DNA + S-adenosyl-L-homocysteine + H(+). In terms of biological role, a methylase that recognizes the double-stranded sequence 5'-GATC-3', methylates C-4 on both strands and protects the DNA from cleavage by the Sau3AI endonuclease. This is Type II methyltransferase M.Sau3AI (sau3AIM) from Staphylococcus aureus.